The following is a 304-amino-acid chain: Hairy/enhancer-of-split related with YRPW motif protein 1 (304 aa).

The disordered stretch occupies residues methionine 1–arginine 52. Polar residues predominate over residues glutamate 28–isoleucine 47. Residues leucine 48–alanine 117 are transcriptional repression and interaction with NCOR1 and SIN3A. The region spanning alanine 49 to leucine 104 is the bHLH domain. In terms of domain architecture, Orange spans tyrosine 122–leucine 158. Positions serine 197–threonine 211 are enriched in polar residues. Residues serine 197 to serine 234 form a disordered region. A YRPW motif motif is present at residues tyrosine 294–tryptophan 297.

Belongs to the HEY family. Self-associates. Interacts with HES1 and HEYL. Interacts with HDAC1, NCOR1 and SIN3A. Interacts with GATA4 and GATA6. Interacts with CCDC89/BOIP.

It is found in the nucleus. Functionally, transcriptional repressor which binds preferentially to the canonical E box sequence 5'-CACGTG-3'. Downstream effector of Notch signaling required for cardiovascular development. Specifically required for the Notch-induced endocardial epithelial to mesenchymal transition, which is itself criticial for cardiac valve and septum development. May be required in conjunction with HEY2 to specify arterial cell fate or identity. Promotes maintenance of neuronal precursor cells and glial versus neuronal fate specification. Represses transcription by the cardiac transcriptional activators GATA4 and GATA6 and by the neuronal bHLH factors ASCL1/MASH1 and NEUROD4/MATH3. This chain is Hairy/enhancer-of-split related with YRPW motif protein 1 (HEY1), found in Bos taurus (Bovine).